A 407-amino-acid polypeptide reads, in one-letter code: D-inositol 3-phosphate glycosyltransferase (407 aa).

1D-myo-inositol 3-phosphate is bound at residue histidine 2. UDP-N-acetyl-alpha-D-glucosamine contacts are provided by residues 8-9 and glycine 16; that span reads QP. 1D-myo-inositol 3-phosphate is bound by residues 13–18, arginine 71, tyrosine 104, threonine 128, and arginine 148; that span reads DAGGLN. UDP-N-acetyl-alpha-D-glucosamine is bound by residues arginine 222 and lysine 227. Mg(2+)-binding residues include tyrosine 297, arginine 298, and alanine 300. Residues glutamate 310 and glutamate 318 each coordinate UDP-N-acetyl-alpha-D-glucosamine. Mg(2+) is bound at residue threonine 324.

This sequence belongs to the glycosyltransferase group 1 family. MshA subfamily. Homodimer.

It catalyses the reaction 1D-myo-inositol 3-phosphate + UDP-N-acetyl-alpha-D-glucosamine = 1D-myo-inositol 2-acetamido-2-deoxy-alpha-D-glucopyranoside 3-phosphate + UDP + H(+). Functionally, catalyzes the transfer of a N-acetyl-glucosamine moiety to 1D-myo-inositol 3-phosphate to produce 1D-myo-inositol 2-acetamido-2-deoxy-glucopyranoside 3-phosphate in the mycothiol biosynthesis pathway. This Frankia alni (strain DSM 45986 / CECT 9034 / ACN14a) protein is D-inositol 3-phosphate glycosyltransferase.